The chain runs to 296 residues: NAD kinase (296 aa).

The Proton acceptor role is filled by Asp74. NAD(+) is bound by residues 74–75, 148–149, Arg176, Asp178, and 189–194; these read DG, ND, and TAYALS.

It belongs to the NAD kinase family. The cofactor is a divalent metal cation.

The protein localises to the cytoplasm. The enzyme catalyses NAD(+) + ATP = ADP + NADP(+) + H(+). Involved in the regulation of the intracellular balance of NAD and NADP, and is a key enzyme in the biosynthesis of NADP. Catalyzes specifically the phosphorylation on 2'-hydroxyl of the adenosine moiety of NAD to yield NADP. The chain is NAD kinase from Nitrosomonas eutropha (strain DSM 101675 / C91 / Nm57).